The sequence spans 167 residues: Bacterial non-heme ferritin (167 aa).

The region spanning 1–145 is the Ferritin-like diiron domain; the sequence is MLSKDIIKLL…DILDKIELIG (145 aa). Fe cation is bound by residues Glu17, Glu50, His53, Glu94, and Gln127.

Belongs to the ferritin family. Prokaryotic subfamily. Homooligomer of 24 subunits that assemble into a spherical protein shell (12 +/- 1 nM diameter) that can sequester at least 2000 iron atoms.

The protein resides in the cytoplasm. It catalyses the reaction 4 Fe(2+) + O2 + 6 H2O = 4 iron(III) oxide-hydroxide + 12 H(+). In terms of biological role, iron-storage protein. In Helicobacter pylori (strain ATCC 700392 / 26695) (Campylobacter pylori), this protein is Bacterial non-heme ferritin (ftnA).